A 294-amino-acid polypeptide reads, in one-letter code: 1,4-dihydroxy-2-naphthoate octaprenyltransferase (294 aa).

The next 6 membrane-spanning stretches (helical) occupy residues 35-55, 103-123, 140-160, 166-186, 220-240, and 272-292; these read SAVW…VIGV, AGLA…ATCI, GFGE…GTEY, VDWV…SVLV, LLVA…WCAV, and GLAM…AGSV.

Belongs to the MenA family. Type 1 subfamily.

It localises to the cell membrane. It carries out the reaction an all-trans-polyprenyl diphosphate + 1,4-dihydroxy-2-naphthoate + H(+) = a 2-demethylmenaquinol + CO2 + diphosphate. It functions in the pathway quinol/quinone metabolism; menaquinone biosynthesis; menaquinol from 1,4-dihydroxy-2-naphthoate: step 1/2. Functionally, conversion of 1,4-dihydroxy-2-naphthoate (DHNA) to demethylmenaquinone (DMK). This is 1,4-dihydroxy-2-naphthoate octaprenyltransferase from Mycobacterium leprae (strain TN).